The following is a 318-amino-acid chain: MVVIVDTISNPLRPRHPEKVNRPDSASPPKPDWIRVRAPNTRGYADTRNIVRANGLHTVCEEAGCPNIGECWDKKHATFMIMGDTCTRACAFCNVKTGLPNALDADEPQNVAEAVAKLGLAHVVITSVDRDDLADGGAEHFAQTIRAIRAACPSTTIEILTPDFLRKEGALEVVVAARPDVFNHNLETVPSRYLTVRPGARYFHSIRLLQRVKELDASIFTKSGIMVGLGEERHEVQQVMDDLRSADVDFLTIGQYLQPTRKHHAVMRYVPPDEFSSYEKVAYTKGFLMVSASPLTRSSHHAGEDFARLKAARAAHAR.

The tract at residues aspartate 6–aspartate 32 is disordered. 7 residues coordinate [4Fe-4S] cluster: cysteine 60, cysteine 65, cysteine 71, cysteine 86, cysteine 90, cysteine 93, and serine 299. Residues tryptophan 72 to leucine 288 form the Radical SAM core domain.

The protein belongs to the radical SAM superfamily. Lipoyl synthase family. It depends on [4Fe-4S] cluster as a cofactor.

Its subcellular location is the cytoplasm. The enzyme catalyses [[Fe-S] cluster scaffold protein carrying a second [4Fe-4S](2+) cluster] + N(6)-octanoyl-L-lysyl-[protein] + 2 oxidized [2Fe-2S]-[ferredoxin] + 2 S-adenosyl-L-methionine + 4 H(+) = [[Fe-S] cluster scaffold protein] + N(6)-[(R)-dihydrolipoyl]-L-lysyl-[protein] + 4 Fe(3+) + 2 hydrogen sulfide + 2 5'-deoxyadenosine + 2 L-methionine + 2 reduced [2Fe-2S]-[ferredoxin]. It participates in protein modification; protein lipoylation via endogenous pathway; protein N(6)-(lipoyl)lysine from octanoyl-[acyl-carrier-protein]: step 2/2. Functionally, catalyzes the radical-mediated insertion of two sulfur atoms into the C-6 and C-8 positions of the octanoyl moiety bound to the lipoyl domains of lipoate-dependent enzymes, thereby converting the octanoylated domains into lipoylated derivatives. This chain is Lipoyl synthase 1, found in Bradyrhizobium diazoefficiens (strain JCM 10833 / BCRC 13528 / IAM 13628 / NBRC 14792 / USDA 110).